Here is a 611-residue protein sequence, read N- to C-terminus: Glutamine--fructose-6-phosphate aminotransferase [isomerizing] (611 aa).

The active-site Nucleophile; for GATase activity is Cys2. The region spanning 2–219 is the Glutamine amidotransferase type-2 domain; the sequence is CGIVGAIAER…EGDIAEIRRD (218 aa). 2 SIS domains span residues 287 to 427 and 460 to 601; these read AAEL…VQKR and VSEL…VDQP. Lys606 serves as the catalytic For Fru-6P isomerization activity.

Homodimer.

It localises to the cytoplasm. It carries out the reaction D-fructose 6-phosphate + L-glutamine = D-glucosamine 6-phosphate + L-glutamate. In terms of biological role, catalyzes the first step in hexosamine metabolism, converting fructose-6P into glucosamine-6P using glutamine as a nitrogen source. This chain is Glutamine--fructose-6-phosphate aminotransferase [isomerizing], found in Pseudomonas aeruginosa (strain ATCC 15692 / DSM 22644 / CIP 104116 / JCM 14847 / LMG 12228 / 1C / PRS 101 / PAO1).